The chain runs to 603 residues: Sesquiterpene synthase Cad (603 aa).

Polar residues predominate over residues 1-13; it reads MAEVGLSQNSYAS. The tract at residues 1–23 is disordered; the sequence is MAEVGLSQNSYASANHDKKSEQQ. 4 residues coordinate Mg(2+): aspartate 357, aspartate 361, aspartate 498, and glutamate 506. The DDXXD motif signature appears at 357–361; it reads DDIFD.

Belongs to the terpene synthase family. Tpsa subfamily. It depends on Mg(2+) as a cofactor. Requires Mn(2+) as cofactor. As to expression, mostly expressed in leaves and, to a lower extent, in stems and xylem.

It catalyses the reaction (2E,6E)-farnesyl diphosphate = beta-cadinene + diphosphate. It functions in the pathway secondary metabolite biosynthesis; terpenoid biosynthesis. Its function is as follows. Sesquiterpene synthase involved in the biosynthesis of volatile compounds. Mediates the conversion of (2E,6E)-farnesyl diphosphate (FPP) into beta-cadinene. Not active with geranyl diphosphate (GPP) and geranylgeranyl diphosphate (GGPP) as substrates. In Chamaecyparis formosensis (Formosan cypress), this protein is Sesquiterpene synthase Cad.